A 720-amino-acid chain; its full sequence is MEPVETWTPGKVATWLRGLDDSLQDYPFEDWQLPGKNLLQLCPQSLEALAVRSLGHQELILGGVEQLQALSSRLQTENLQSLTEGLLGATHDFQSIVQGCLGDCAKTPIDVLCAAVELLHEADALLFWLSRYLFSHLNDFSACQEIRDLLEELSQVLHEDGPAAEKEGTVLRICSHVAGICHNILVCCPKELLEQKAVLEQVQLDSPLGLEIHTTSNCQHFVSQVDTQVPTDSRLQIQPGDEVVQINEQVVVREERDMVGWPRKNMVRELLREPAGLSLVLKKIPIPETPPQTPPQVLDSPHQRSPSLSLAPLSPRAPSEDVFAFDLSSNPSPGPSPAWTDSASLGPEPLPIPPEPPAILPAGVAGTPGLPESPDKSPVGRKKSKGLATRLSRRRVSCRELGRPDCDGWLLLRKAPGGFMGPRWRRRWFVLKGHTLYWYRQPQDEKAEGLINVSNYSLESGHDQKKKYVFQLTHDVYKPFIFAADTLTDLSMWVRHLITCISKYQSPGRAPPPREEDCYSETEAEDPDDEAGSHSASPSPAQAGSPLHGDTSPAATPTQRSPRTSFGSLTDSSEEALEGMVRGLRQGGVSLLGQPQPLTQEQWRSSFMRRNRDPQLNERVHRVRALQSTLKAKLQELQVLEEVLGDPELTGEKFRQWKEQNRELYSEGLGAWGVAQAEGSSHILTSDSTEQSPHSLPSDPEEHSHLCPLTSESSLRPPDL.

Positions 7 to 70 (WTPGKVATWL…LGGVEQLQAL (64 aa)) constitute an SAM domain. A CRIC domain is found at 78–164 (NLQSLTEGLL…QVLHEDGPAA (87 aa)). Residues 196–285 (KAVLEQVQLD…GLSLVLKKIP (90 aa)) enclose the PDZ domain. The tract at residues 285–390 (PIPETPPQTP…RKKSKGLATR (106 aa)) is disordered. Over residues 304–317 (RSPSLSLAPLSPRA) the composition is skewed to low complexity. Phosphoserine is present on residues S307 and S314. A compositionally biased stretch (pro residues) spans 348–359 (EPLPIPPEPPAI). Residues 379–390 (VGRKKSKGLATR) are compositionally biased toward basic residues. Positions 403-502 (RPDCDGWLLL…WVRHLITCIS (100 aa)) constitute a PH domain. Positions 504–573 (YQSPGRAPPP…TSFGSLTDSS (70 aa)) are disordered. Over residues 518–530 (CYSETEAEDPDDE) the composition is skewed to acidic residues. Residues 533-546 (SHSASPSPAQAGSP) are compositionally biased toward low complexity. Residues 553 to 571 (PAATPTQRSPRTSFGSLTD) show a composition bias toward polar residues. Residues 615 to 646 (QLNERVHRVRALQSTLKAKLQELQVLEEVLGD) are a coiled coil. Positions 676–720 (QAEGSSHILTSDSTEQSPHSLPSDPEEHSHLCPLTSESSLRPPDL) are disordered. Residues 678 to 695 (EGSSHILTSDSTEQSPHS) show a composition bias toward polar residues.

Belongs to the CNKSR family. As to quaternary structure, interacts with RHO and RALGDS. In terms of processing, phosphorylated on tyrosine.

The protein resides in the cytoplasm. Its subcellular location is the membrane. In terms of biological role, may function as an adapter protein or regulator of Ras signaling pathways. In Homo sapiens (Human), this protein is Connector enhancer of kinase suppressor of ras 1 (CNKSR1).